The primary structure comprises 369 residues: DNA replication and repair protein RecF (369 aa).

30-37 lines the ATP pocket; the sequence is GDNGSGKT.

Belongs to the RecF family.

It is found in the cytoplasm. Its function is as follows. The RecF protein is involved in DNA metabolism; it is required for DNA replication and normal SOS inducibility. RecF binds preferentially to single-stranded, linear DNA. It also seems to bind ATP. This is DNA replication and repair protein RecF from Pseudomonas aeruginosa (strain UCBPP-PA14).